Here is a 467-residue protein sequence, read N- to C-terminus: 3-isopropylmalate dehydratase large subunit (467 aa).

Residues cysteine 349, cysteine 408, and cysteine 411 each coordinate [4Fe-4S] cluster.

This sequence belongs to the aconitase/IPM isomerase family. LeuC type 1 subfamily. In terms of assembly, heterodimer of LeuC and LeuD. It depends on [4Fe-4S] cluster as a cofactor.

The enzyme catalyses (2R,3S)-3-isopropylmalate = (2S)-2-isopropylmalate. It functions in the pathway amino-acid biosynthesis; L-leucine biosynthesis; L-leucine from 3-methyl-2-oxobutanoate: step 2/4. Functionally, catalyzes the isomerization between 2-isopropylmalate and 3-isopropylmalate, via the formation of 2-isopropylmaleate. The sequence is that of 3-isopropylmalate dehydratase large subunit from Dinoroseobacter shibae (strain DSM 16493 / NCIMB 14021 / DFL 12).